The sequence spans 240 residues: Acetoacetyl-CoA reductase (240 aa).

Residues 18–20 and 82–86 contribute to the NADP(+) site; these read RGI and NAGIT. Substrate is bound by residues serine 134 and 141 to 144; that span reads NVGQ. Residue tyrosine 147 is the Proton acceptor of the active site. 177–180 provides a ligand contact to NADP(+); that stretch reads PGFI. 178-179 provides a ligand contact to substrate; sequence GF.

It belongs to the short-chain dehydrogenases/reductases (SDR) family.

It carries out the reaction a (3R)-3-hydroxyacyl-CoA + NADP(+) = a 3-oxoacyl-CoA + NADPH + H(+). Its pathway is biopolymer metabolism; poly-(R)-3-hydroxybutanoate biosynthesis. Functionally, catalyzes the reduction of acetoacetyl-CoA to (R)-3-hydroxybutyryl-CoA. When expressed in E.coli with Synechocystis PhaA, PhaC and PhaE confers the ability to synthesize up to 12% (w/w) poly(3-hydroxybutyrate) (PHB) depending on the carbon source. The sequence is that of Acetoacetyl-CoA reductase from Synechocystis sp. (strain ATCC 27184 / PCC 6803 / Kazusa).